We begin with the raw amino-acid sequence, 260 residues long: MAQEPILTARGLVKRYGRVTALDRADFDLYPGEILAVIGDNGAGKSSMIKAISGAVTPDEGEIRLEGKPIQFRSPMEARQAGIETVYQNLALSPALSIADNMFLGREIRKPGIMGKWFRSLDRAAMEKQARAKLSELGLMTIQNINQAVETLSGGQRQGVAVARAAAFGSKVVIMDEPTAALGVKESRRVLELILDVRRRGLPIVLISHNMPHVFEVADRIHIHRLGRRLCVINPKDYTMSDAVAFMTGAKEPPREAIAA.

Residues 7–251 enclose the ABC transporter domain; sequence LTARGLVKRY…DAVAFMTGAK (245 aa). 39–46 lines the ATP pocket; sequence GDNGAGKS.

Belongs to the ABC transporter superfamily. The complex is composed of two ATP-binding proteins (FrcA), two transmembrane proteins (FrcC) and a solute-binding protein (FrcB).

Its subcellular location is the cell inner membrane. The enzyme catalyses D-fructose(out) + ATP + H2O = D-fructose(in) + ADP + phosphate + H(+). Its function is as follows. Part of the high-affinity ABC transporter complex FrcBCA involved in fructose uptake. Is also a high-affinity transporter for ribose and mannose. Responsible for energy coupling to the transport system. The chain is Fructose import ATP-binding protein FrcA from Rhizobium meliloti (Ensifer meliloti).